We begin with the raw amino-acid sequence, 328 residues long: Leucine carboxyl methyltransferase 1 (328 aa).

Residues Arg81, Gly105, Asp128, 175-177 (DLN), and Glu201 contribute to the S-adenosyl-L-methionine site.

This sequence belongs to the methyltransferase superfamily. LCMT family.

It carries out the reaction [phosphatase 2A protein]-C-terminal L-leucine + S-adenosyl-L-methionine = [phosphatase 2A protein]-C-terminal L-leucine methyl ester + S-adenosyl-L-homocysteine. With respect to regulation, inhibited by S-adenosyl-L-homocysteine. Functionally, methylates the carboxyl group of the C-terminal leucine residue of protein phosphatase 2A catalytic subunits to form alpha-leucine ester residues. Acts on the two major protein phosphatase 2A catalytic subunits, PPH21 and PPH22. The protein is Leucine carboxyl methyltransferase 1 (PPM1) of Saccharomyces cerevisiae (strain ATCC 204508 / S288c) (Baker's yeast).